The sequence spans 431 residues: MTVKTEAAKGTLTYSRMRGMVAILIAFMKQRRMGLNDFIQKIANNSYACKHPEVQSILKISQPQEPELMNANPSPPPSPSQQINLGPSSNPHAKPSDFHFLKVIGKGSFGKVLLARHKAEEVFYAVKVLQKKAILKKKEEKHIMSERNVLLKNVKHPFLVGLHFSFQTADKLYFVLDYINGGELFYHLQRERCFLEPRARFYAAEIASALGYLHSLNIVYRDLKPENILLDSQGHIVLTDFGLCKENIEHNSTTSTFCGTPEYLAPEVLHKQPYDRTVDWWCLGAVLYEMLYGLPPFYSRNTAEMYDNILNKPLQLKPNITNSARHLLEGLLQKDRMKRLGAKDDFMEIKSHVFFSLINWDDLINKKITPPFNPNVSGPNDLRHFDPEFTEEPVPNSIGKSPDSILVTASVKEAAETFLGFSYAPPTDSFL.

Positions Met1–Ile60 are necessary for localization to the mitochondria. The interval Pro66–His92 is disordered. Ser74 bears the Phosphoserine mark. A Phosphoserine; by MAPK7 modification is found at Ser78. The span at Gln81–Pro91 shows a compositional bias: polar residues. The region spanning Phe98–Phe355 is the Protein kinase domain. ATP contacts are provided by residues Ile104–Val112 and Lys127. Residues Lys131–Lys141 carry the Nuclear localization signal motif. Asp222 (proton acceptor) is an active-site residue. A Phosphothreonine; by PDPK1 modification is found at Thr256. Positions Ser356–Leu431 constitute an AGC-kinase C-terminal domain. Thr369 carries the post-translational modification Phosphothreonine; by PKA. Ser397, Ser401, and Ser422 each carry phosphoserine.

The protein belongs to the protein kinase superfamily. AGC Ser/Thr protein kinase family. As to quaternary structure, homodimer; disulfide-linked. Forms a trimeric complex with FBXW7 and NOTCH1. Interacts with MAPK3/ERK1, MAPK1/ERK2, MAP2K1/MEK1, MAP2K2/MEK2, NEDD4, NEDD4L, MAPT/TAU, MAPK7, CREB1, SLC9A3R2/NHERF2 and KCNJ1/ROMK1. Associates with the mammalian target of rapamycin complex 2 (mTORC2) via an interaction with MAPKAP1/SIN1. Post-translationally, regulated by phosphorylation. Activated by phosphorylation on Ser-422 by mTORC2, transforming it into a substrate for PDPK1 which phosphorylates it on Thr-256. Phosphorylation on Ser-397 and Ser-401 are also essential for its activity. Phosphorylation on Ser-78 by MAPK7 is required for growth factor-induced cell cycle progression. Ubiquitinated by NEDD4L; which promotes proteasomal degradation. Ubiquitinated by SYVN1 at the endoplasmic reticulum; which promotes rapid proteasomal degradation and maintains a high turnover rate in resting cells.

It localises to the cytoplasm. It is found in the nucleus. The protein localises to the endoplasmic reticulum membrane. Its subcellular location is the cell membrane. The protein resides in the mitochondrion. The enzyme catalyses L-seryl-[protein] + ATP = O-phospho-L-seryl-[protein] + ADP + H(+). It catalyses the reaction L-threonyl-[protein] + ATP = O-phospho-L-threonyl-[protein] + ADP + H(+). Its activity is regulated as follows. Two specific sites, one in the kinase domain (Thr-256) and the other in the C-terminal regulatory region (Ser-422), need to be phosphorylated for its full activation. Phosphorylation at Ser-397 and Ser-401 are also essential for its activity. Activated by WNK1, WNK2, WNK3 and WNK4; which promote phosphorylation by mTORC2. In terms of biological role, serine/threonine-protein kinase which is involved in the regulation of a wide variety of ion channels, membrane transporters, cellular enzymes, transcription factors, neuronal excitability, cell growth, proliferation, survival, migration and apoptosis. Plays an important role in cellular stress response. Contributes to regulation of renal Na(+) retention, renal K(+) elimination, salt appetite, gastric acid secretion, intestinal Na(+)/H(+) exchange and nutrient transport, insulin-dependent salt sensitivity of blood pressure, salt sensitivity of peripheral glucose uptake, cardiac repolarization and memory consolidation. Up-regulates Na(+) channels: SCNN1A/ENAC, SCN5A and ASIC1/ACCN2, K(+) channels: KCNJ1/ROMK1, KCNA1-5, KCNQ1-5 and KCNE1, epithelial Ca(2+) channels: TRPV5 and TRPV6, chloride channels: BSND, CLCN2 and CFTR, glutamate transporters: SLC1A3/EAAT1, SLC1A2 /EAAT2, SLC1A1/EAAT3, SLC1A6/EAAT4 and SLC1A7/EAAT5, amino acid transporters: SLC1A5/ASCT2, SLC38A1/SN1 and SLC6A19, creatine transporter: SLC6A8, Na(+)/dicarboxylate cotransporter: SLC13A2/NADC1, Na(+)-dependent phosphate cotransporter: SLC34A2/NAPI-2B, glutamate receptor: GRIK2/GLUR6. Up-regulates carriers: SLC9A3/NHE3, SLC12A1/NKCC2, SLC12A3/NCC, SLC5A3/SMIT, SLC2A1/GLUT1, SLC5A1/SGLT1 and SLC15A2/PEPT2. Regulates enzymes: GSK3A/B, PMM2 and Na(+)/K(+) ATPase, and transcription factors: CTNNB1 and nuclear factor NF-kappa-B. Stimulates sodium transport into epithelial cells by enhancing the stability and expression of SCNN1A/ENAC. This is achieved by phosphorylating the NEDD4L ubiquitin E3 ligase, promoting its interaction with 14-3-3 proteins, thereby preventing it from binding to SCNN1A/ENAC and targeting it for degradation. Regulates store-operated Ca(+2) entry (SOCE) by stimulating ORAI1 and STIM1. Regulates KCNJ1/ROMK1 directly via its phosphorylation or indirectly via increased interaction with SLC9A3R2/NHERF2. Phosphorylates MDM2 and activates MDM2-dependent ubiquitination of p53/TP53. Phosphorylates MAPT/TAU and mediates microtubule depolymerization and neurite formation in hippocampal neurons. Phosphorylates SLC2A4/GLUT4 and up-regulates its activity. Phosphorylates APBB1/FE65 and promotes its localization to the nucleus. Phosphorylates MAPK1/ERK2 and activates it by enhancing its interaction with MAP2K1/MEK1 and MAP2K2/MEK2. Phosphorylates FBXW7 and plays an inhibitory role in the NOTCH1 signaling. Phosphorylates FOXO1 resulting in its relocalization from the nucleus to the cytoplasm. Phosphorylates FOXO3, promoting its exit from the nucleus and interference with FOXO3-dependent transcription. Phosphorylates BRAF and MAP3K3/MEKK3 and inhibits their activity. Phosphorylates SLC9A3/NHE3 in response to dexamethasone, resulting in its activation and increased localization at the cell membrane. Phosphorylates CREB1. Necessary for vascular remodeling during angiogenesis. This chain is Serine/threonine-protein kinase Sgk1 (SGK1), found in Macaca fascicularis (Crab-eating macaque).